We begin with the raw amino-acid sequence, 1342 residues long: DNA-directed RNA polymerase subunit beta (1342 aa).

Belongs to the RNA polymerase beta chain family. The RNAP catalytic core consists of 2 alpha, 1 beta, 1 beta' and 1 omega subunit. When a sigma factor is associated with the core the holoenzyme is formed, which can initiate transcription.

The enzyme catalyses RNA(n) + a ribonucleoside 5'-triphosphate = RNA(n+1) + diphosphate. Its function is as follows. DNA-dependent RNA polymerase catalyzes the transcription of DNA into RNA using the four ribonucleoside triphosphates as substrates. The chain is DNA-directed RNA polymerase subunit beta from Blochmanniella floridana.